Consider the following 324-residue polypeptide: tRNA pseudouridine synthase B (324 aa).

Catalysis depends on Asp49, which acts as the Nucleophile. The interval 87–107 (RSTDDLEGQPTKTSDKRPSRE) is disordered.

Belongs to the pseudouridine synthase TruB family. Type 1 subfamily.

It carries out the reaction uridine(55) in tRNA = pseudouridine(55) in tRNA. Functionally, responsible for synthesis of pseudouridine from uracil-55 in the psi GC loop of transfer RNAs. This is tRNA pseudouridine synthase B from Brucella abortus (strain 2308).